A 207-amino-acid chain; its full sequence is D-aminoacyl-tRNA deacylase 1 (207 aa).

Positions 139-140 (GP) match the Gly-cisPro motif, important for rejection of L-amino acids motif. The interval 142-207 (TIQLESPPAP…EGDVSSEREP (66 aa)) is disordered. Basic and acidic residues-rich tracts occupy residues 156–167 (LLSKQEKQQQRK) and 178–189 (SSREKAAQRSKV).

It belongs to the DTD family. As to quaternary structure, homodimer.

It localises to the cytoplasm. The catalysed reaction is a D-aminoacyl-tRNA + H2O = a tRNA + a D-alpha-amino acid + H(+). The enzyme catalyses glycyl-tRNA(Ala) + H2O = tRNA(Ala) + glycine + H(+). D-aminoacyl-tRNA deacylase, with no observable activity on tRNAs charged with their cognate L-amino acid. Hydrolyzes correctly charged, achiral, glycyl-tRNA(Gly). Deacylates mischarged D.melanogaster and E.coli glycyl-tRNA(Ala), protecting cells against glycine mischarging by AlaRS. Acts via tRNA-based rather than protein-based catalysis; rejects L-amino acids rather than detecting D-amino acids in the active site. By recycling D-aminoacyl-tRNA to D-amino acids and free tRNA molecules, this enzyme counteracts the toxicity associated with the formation of D-aminoacyl-tRNA entities in vivo and helps enforce protein L-homochirality. In Danio rerio (Zebrafish), this protein is D-aminoacyl-tRNA deacylase 1.